Here is a 447-residue protein sequence, read N- to C-terminus: Gamma-glutamyl phosphate reductase (447 aa).

This sequence belongs to the gamma-glutamyl phosphate reductase family.

The protein resides in the cytoplasm. It carries out the reaction L-glutamate 5-semialdehyde + phosphate + NADP(+) = L-glutamyl 5-phosphate + NADPH + H(+). It participates in amino-acid biosynthesis; L-proline biosynthesis; L-glutamate 5-semialdehyde from L-glutamate: step 2/2. Catalyzes the NADPH-dependent reduction of L-glutamate 5-phosphate into L-glutamate 5-semialdehyde and phosphate. The product spontaneously undergoes cyclization to form 1-pyrroline-5-carboxylate. In Methanosarcina mazei (strain ATCC BAA-159 / DSM 3647 / Goe1 / Go1 / JCM 11833 / OCM 88) (Methanosarcina frisia), this protein is Gamma-glutamyl phosphate reductase.